Consider the following 167-residue polypeptide: Ureidoglycolate lyase (167 aa).

The protein belongs to the ureidoglycolate lyase family. In terms of assembly, homodimer. Ni(2+) serves as cofactor.

The catalysed reaction is (S)-ureidoglycolate = urea + glyoxylate. It participates in nitrogen metabolism; (S)-allantoin degradation. Functionally, catalyzes the catabolism of the allantoin degradation intermediate (S)-ureidoglycolate, generating urea and glyoxylate. Involved in the utilization of allantoin as nitrogen source. The sequence is that of Ureidoglycolate lyase from Pseudomonas fluorescens (strain ATCC BAA-477 / NRRL B-23932 / Pf-5).